Reading from the N-terminus, the 473-residue chain is Photosystem II CP43 reaction center protein (473 aa).

Positions 1–14 (MKTLYSLRRFYPVE) are excised as a propeptide. T15 bears the N-acetylthreonine mark. Residue T15 is modified to Phosphothreonine. The next 5 membrane-spanning stretches (helical) occupy residues 69–93 (LFEV…PHLA), 134–155 (LIGP…KDRN), 178–200 (KALY…RKIT), 255–275 (KPFA…LSYS), and 291–312 (WFNN…ASQA). A [CaMn4O5] cluster-binding site is contributed by E367. The helical transmembrane segment at 447 to 471 (RARAAAAGFEKGIDRDFEPVLSMTP) threads the bilayer.

Belongs to the PsbB/PsbC family. PsbC subfamily. In terms of assembly, PSII is composed of 1 copy each of membrane proteins PsbA, PsbB, PsbC, PsbD, PsbE, PsbF, PsbH, PsbI, PsbJ, PsbK, PsbL, PsbM, PsbT, PsbX, PsbY, PsbZ, Psb30/Ycf12, at least 3 peripheral proteins of the oxygen-evolving complex and a large number of cofactors. It forms dimeric complexes. Binds multiple chlorophylls and provides some of the ligands for the Ca-4Mn-5O cluster of the oxygen-evolving complex. It may also provide a ligand for a Cl- that is required for oxygen evolution. PSII binds additional chlorophylls, carotenoids and specific lipids. is required as a cofactor.

Its subcellular location is the plastid. The protein resides in the chloroplast thylakoid membrane. One of the components of the core complex of photosystem II (PSII). It binds chlorophyll and helps catalyze the primary light-induced photochemical processes of PSII. PSII is a light-driven water:plastoquinone oxidoreductase, using light energy to abstract electrons from H(2)O, generating O(2) and a proton gradient subsequently used for ATP formation. The polypeptide is Photosystem II CP43 reaction center protein (Cryptomeria japonica (Japanese cedar)).